The sequence spans 81 residues: Conotoxin Vc6.13 (81 aa).

An N-terminal signal peptide occupies residues 1–19; that stretch reads MEKLTILLLVAAVLMSIQA. Residues 20 to 44 constitute a propeptide that is removed on maturation; that stretch reads LNQEQHQRAKINLLSKRKAPAERWW. Disulfide bonds link C49/C63, C56/C67, and C62/C72.

This sequence belongs to the conotoxin O2 superfamily. In terms of tissue distribution, expressed by the venom duct.

It localises to the secreted. In terms of biological role, inhibits voltage-gated ion channels. The protein is Conotoxin Vc6.13 of Conus victoriae (Queen Victoria cone).